Consider the following 328-residue polypeptide: Ribosomal RNA small subunit methyltransferase C (328 aa).

It belongs to the methyltransferase superfamily. RsmC family. In terms of assembly, monomer.

It localises to the cytoplasm. It carries out the reaction guanosine(1207) in 16S rRNA + S-adenosyl-L-methionine = N(2)-methylguanosine(1207) in 16S rRNA + S-adenosyl-L-homocysteine + H(+). In terms of biological role, specifically methylates the guanine in position 1207 of 16S rRNA in the 30S particle. This Pasteurella multocida (strain Pm70) protein is Ribosomal RNA small subunit methyltransferase C.